The sequence spans 431 residues: Glutamate-1-semialdehyde 2,1-aminomutase (431 aa).

At K269 the chain carries N6-(pyridoxal phosphate)lysine.

This sequence belongs to the class-III pyridoxal-phosphate-dependent aminotransferase family. HemL subfamily. As to quaternary structure, homodimer. Pyridoxal 5'-phosphate is required as a cofactor.

Its subcellular location is the cytoplasm. The catalysed reaction is (S)-4-amino-5-oxopentanoate = 5-aminolevulinate. It functions in the pathway porphyrin-containing compound metabolism; protoporphyrin-IX biosynthesis; 5-aminolevulinate from L-glutamyl-tRNA(Glu): step 2/2. The protein is Glutamate-1-semialdehyde 2,1-aminomutase of Francisella tularensis subsp. tularensis (strain SCHU S4 / Schu 4).